Reading from the N-terminus, the 316-residue chain is HTH-type transcriptional regulator cbl (316 aa).

Positions 1-59 constitute an HTH lysR-type domain; that stretch reads MNFQQLKIIREAARQDYNLTEVANMLFTSQSGVSRHIRELEDELGIEIFVRRGKRLLGM. A DNA-binding region (H-T-H motif) is located at residues 19 to 38; the sequence is LTEVANMLFTSQSGVSRHIR.

Belongs to the LysR transcriptional regulatory family.

May be an accessory regulatory protein within the cys regulon. This chain is HTH-type transcriptional regulator cbl (cbl), found in Escherichia coli (strain K12).